Here is a 358-residue protein sequence, read N- to C-terminus: Methionine import ATP-binding protein MetN (358 aa).

Residues 2-247 form the ABC transporter domain; that stretch reads ITTTGLTKVY…PGSELAHELF (246 aa). ATP is bound at residue 38 to 45; that stretch reads GQSGAGKS.

Belongs to the ABC transporter superfamily. Methionine importer (TC 3.A.1.24) family. In terms of assembly, the complex is composed of two ATP-binding proteins (MetN), two transmembrane proteins (MetI) and a solute-binding protein (MetQ).

It localises to the cell membrane. It carries out the reaction L-methionine(out) + ATP + H2O = L-methionine(in) + ADP + phosphate + H(+). It catalyses the reaction D-methionine(out) + ATP + H2O = D-methionine(in) + ADP + phosphate + H(+). In terms of biological role, part of the ABC transporter complex MetNIQ involved in methionine import. Responsible for energy coupling to the transport system. The sequence is that of Methionine import ATP-binding protein MetN from Streptomyces griseus.